Reading from the N-terminus, the 712-residue chain is Autophagy-related protein 13 (712 aa).

2 disordered regions span residues 388–443 and 568–611; these read AGST…ETPP and GSVG…DDDE. Residues 402–415 show a composition bias toward low complexity; it reads SSVGSGSKYSSSFG. Positions 412-420 are ATG17-binding; it reads SSFGRIRRH. Residues 424–439 are compositionally biased toward basic and acidic residues; the sequence is RRSESIDRTAKPRKSN. The interval 441–500 is ATG1-binding; sequence TPPEDLLEFVKLLEDKKELNMKPSTILPQQDISSSLIKFQSMKPNNDTLSDNLSMSMSID. Over residues 576–585 the composition is skewed to acidic residues; it reads TNEDSKEDED.

Belongs to the ATG13 family. Fungi subfamily. As to quaternary structure, hypophosphorylated form interacts with ATG1 to form the ATG1-ATG13 kinase complex. The ATG1-ATG13 complex interacts with the ATG17-ATG29-ATG31 complex through direct interaction with ATG17. Interacts with VAC8. In terms of processing, hyperphosphorylated under nutrient-rich conditions. Starvation and TOR inactivation results in ATG13 partial dephosphorylation leading to ATG1-binding. Dephosphorylation induces ATG17-binding.

Its subcellular location is the cytoplasm. The protein localises to the preautophagosomal structure. Activates the ATG1 kinase in a nutritional condition dependent manner through the TOR pathway, leading to autophagy. Involved in ATG9 and ATG23 cycling through the pre-autophagosomal structure. Also involved in cytoplasm to vacuole transport (Cvt) and more specifically in Cvt vesicle formation. Seems to play a role in the switching machinery regulating the conversion between the Cvt pathway and autophagy. Finally, ATG13 is also required for glycogen storage during stationary phase. The protein is Autophagy-related protein 13 of Kluyveromyces marxianus (strain DMKU3-1042 / BCC 29191 / NBRC 104275) (Yeast).